The chain runs to 204 residues: Acyl-homoserine-lactone synthase (204 aa).

Belongs to the autoinducer synthase family.

It carries out the reaction a fatty acyl-[ACP] + S-adenosyl-L-methionine = an N-acyl-L-homoserine lactone + S-methyl-5'-thioadenosine + holo-[ACP] + H(+). Required for the synthesis of acyl-HSL autoinducers that bind to SolR. This is Acyl-homoserine-lactone synthase (solI) from Ralstonia solanacearum (Pseudomonas solanacearum).